A 337-amino-acid polypeptide reads, in one-letter code: DNA-directed RNA polymerase subunit alpha (337 aa).

An alpha N-terminal domain (alpha-NTD) region spans residues Met-1–Glu-233. The interval Phe-249–Tyr-337 is alpha C-terminal domain (alpha-CTD).

This sequence belongs to the RNA polymerase alpha chain family. In terms of assembly, homodimer. The RNAP catalytic core consists of 2 alpha, 1 beta, 1 beta' and 1 omega subunit. When a sigma factor is associated with the core the holoenzyme is formed, which can initiate transcription.

It catalyses the reaction RNA(n) + a ribonucleoside 5'-triphosphate = RNA(n+1) + diphosphate. Functionally, DNA-dependent RNA polymerase catalyzes the transcription of DNA into RNA using the four ribonucleoside triphosphates as substrates. The protein is DNA-directed RNA polymerase subunit alpha of Brucella suis (strain ATCC 23445 / NCTC 10510).